Consider the following 758-residue polypeptide: 5-methyltetrahydropteroyltriglutamate--homocysteine methyltransferase (758 aa).

Residues 17–20 (RELK) and Lys113 contribute to the 5-methyltetrahydropteroyltri-L-glutamate site. Residues 433-435 (IGS) and Glu486 contribute to the L-homocysteine site. L-methionine-binding positions include 433-435 (IGS) and Glu486. 5-methyltetrahydropteroyltri-L-glutamate is bound by residues 517–518 (RC) and Trp563. Asp601 is a binding site for L-homocysteine. Asp601 contacts L-methionine. Glu607 is a binding site for 5-methyltetrahydropteroyltri-L-glutamate. Residues His643, Cys645, and Glu667 each coordinate Zn(2+). His696 (proton donor) is an active-site residue. Cys728 contributes to the Zn(2+) binding site.

The protein belongs to the vitamin-B12 independent methionine synthase family. The cofactor is Zn(2+).

The catalysed reaction is 5-methyltetrahydropteroyltri-L-glutamate + L-homocysteine = tetrahydropteroyltri-L-glutamate + L-methionine. It functions in the pathway amino-acid biosynthesis; L-methionine biosynthesis via de novo pathway; L-methionine from L-homocysteine (MetE route): step 1/1. In terms of biological role, catalyzes the transfer of a methyl group from 5-methyltetrahydrofolate to homocysteine resulting in methionine formation. The polypeptide is 5-methyltetrahydropteroyltriglutamate--homocysteine methyltransferase (Nitrosomonas europaea (strain ATCC 19718 / CIP 103999 / KCTC 2705 / NBRC 14298)).